The following is a 62-amino-acid chain: Large ribosomal subunit protein eL24 (62 aa).

4 residues coordinate Zn(2+): cysteine 7, cysteine 10, cysteine 33, and cysteine 37. The C4-type zinc-finger motif lies at 7–37; that stretch reads CSFCGREIEPGTGIMYVKNDGSILWFCSRKC.

Belongs to the eukaryotic ribosomal protein eL24 family. As to quaternary structure, part of the 50S ribosomal subunit. Forms a cluster with proteins L3 and L14. Requires Zn(2+) as cofactor.

Binds to the 23S rRNA. In Staphylothermus marinus (strain ATCC 43588 / DSM 3639 / JCM 9404 / F1), this protein is Large ribosomal subunit protein eL24.